A 499-amino-acid chain; its full sequence is Pentatricopeptide repeat-containing protein PPR5, chloroplastic (499 aa).

The segment covering 1-12 (MLACPSTSSPWP) has biased composition (low complexity). The tract at residues 1–28 (MLACPSTSSPWPQRQPPSPCPGGGGGAT) is disordered. Residues 1–45 (MLACPSTSSPWPQRQPPSPCPGGGGGATRHVALAARSKRRGAGPA) constitute a chloroplast transit peptide. 9 PPR repeats span residues 123 to 157 (DNGI…GCKP), 158 to 193 (DTSV…KCIE), 198 to 232 (TIVT…VVSP), 233 to 267 (DVYT…QCRP), 268 to 302 (DVIT…KERP), 303 to 337 (THPT…GFKP), 338 to 372 (NYVT…QTKV), 373 to 407 (HLSS…CVVP), and 408 to 442 (NGST…GIVP). The segment at 458 to 499 (DRKPRTSPGINSASKPSTDSAGDSETATSDKPEVSVWHVAAT) is disordered. Positions 465-484 (PGINSASKPSTDSAGDSETA) are enriched in polar residues.

Belongs to the PPR family. P subfamily.

Its subcellular location is the plastid. The protein localises to the chloroplast. Involved in the biogenesis of the plastid translation machinery by promoting the splicing of group II introns in chloroplasts. Stabilizes the chloroplast trnG pre-RNA by directly binding to a group II intron, where it protects an endonuclease-sensitive site and stimulates splicing. Binds specific sites within group II intron trnG pre-RNA. Binds with high affinity to the 5'-UTR of the chloroplastic petA mRNA. The protein is Pentatricopeptide repeat-containing protein PPR5, chloroplastic of Zea mays (Maize).